The primary structure comprises 351 residues: Translation initiation factor eIF2B subunit beta (351 aa).

This sequence belongs to the eIF-2B alpha/beta/delta subunits family. In terms of assembly, component of the translation initiation factor 2B (eIF2B) complex which is a heterodecamer of two sets of five different subunits: alpha, beta, gamma, delta and epsilon. Subunits alpha, beta and delta comprise a regulatory subcomplex and subunits epsilon and gamma comprise a catalytic subcomplex. Within the complex, the hexameric regulatory complex resides at the center, with the two heterodimeric catalytic subcomplexes bound on opposite sides.

It is found in the cytoplasm. The protein resides in the cytosol. Activated by the chemical integrated stress response (ISR) inhibitor ISRIB which stimulates guanine nucleotide exchange factor activity for both phosphorylated and unphosphorylated eIF2. Functionally, acts as a component of the translation initiation factor 2B (eIF2B) complex, which catalyzes the exchange of GDP for GTP on eukaryotic initiation factor 2 (eIF2) gamma subunit. Its guanine nucleotide exchange factor activity is repressed when bound to eIF2 complex phosphorylated on the alpha subunit, thereby limiting the amount of methionyl-initiator methionine tRNA available to the ribosome and consequently global translation is repressed. The polypeptide is Translation initiation factor eIF2B subunit beta (EIF2B2) (Oryctolagus cuniculus (Rabbit)).